Here is a 241-residue protein sequence, read N- to C-terminus: Fatty acid metabolism regulator protein (241 aa).

Residues 6–74 enclose the HTH gntR-type domain; that stretch reads KGPASFAEKY…HGKPTRVNNF (69 aa). Residues 34–53 constitute a DNA-binding region (H-T-H motif); it reads ERELSELIGVTRTTLREVLQ.

As to quaternary structure, homodimer.

It localises to the cytoplasm. Functionally, multifunctional regulator of fatty acid metabolism. The polypeptide is Fatty acid metabolism regulator protein (Shewanella sp. (strain MR-4)).